We begin with the raw amino-acid sequence, 648 residues long: Primary amine oxidase (648 aa).

Residues 1–9 (MTLNAESEA) constitute a propeptide that is removed on maturation. Substrate is bound at residue 299-310 (AFDSGEYNIGNM). The active-site Proton acceptor is the Asp301. Residues Cys320 and Cys346 are joined by a disulfide bond. A substrate-binding site is contributed by 382-387 (VANYEY). Catalysis depends on Tyr385, which acts as the Schiff-base intermediate with substrate; via topaquinone. Tyr385 is subject to 2',4',5'-topaquinone. Residues His436 and His438 each contribute to the Cu cation site. 3 residues coordinate Mn(2+): Asp445, Phe446, and Asp584. Cu cation is bound at residue His595.

It belongs to the copper/topaquinone oxidase family. As to quaternary structure, homodimer. Cu cation is required as a cofactor. Requires Zn(2+) as cofactor. It depends on L-topaquinone as a cofactor. The cofactor is Mn(2+). Topaquinone (TPQ) is generated by copper-dependent autoxidation of a specific tyrosyl residue.

It catalyses the reaction a primary methyl amine + O2 + H2O = an aldehyde + H2O2 + NH4(+). The exact function of MaoXI is not known. The polypeptide is Primary amine oxidase (maoI) (Arthrobacter sp. (strain P1)).